A 937-amino-acid chain; its full sequence is Protein translocase subunit SecA (937 aa).

Residues glutamine 90, 108–112 (GEGKT), and aspartate 509 contribute to the ATP site.

It belongs to the SecA family. As to quaternary structure, monomer and homodimer. Part of the essential Sec protein translocation apparatus which comprises SecA, SecYEG and auxiliary proteins SecDF. Other proteins may also be involved.

The protein resides in the cell inner membrane. Its subcellular location is the cellular thylakoid membrane. It localises to the cytoplasm. It catalyses the reaction ATP + H2O + cellular proteinSide 1 = ADP + phosphate + cellular proteinSide 2.. Its function is as follows. Part of the Sec protein translocase complex. Interacts with the SecYEG preprotein conducting channel. Has a central role in coupling the hydrolysis of ATP to the transfer of proteins into and across the cell membrane, serving as an ATP-driven molecular motor driving the stepwise translocation of polypeptide chains across the membrane. Functionally, probably participates in protein translocation into and across both the cytoplasmic and thylakoid membranes in cyanobacterial cells. This is Protein translocase subunit SecA from Synechococcus sp. (strain CC9902).